The sequence spans 256 residues: Probable transcriptional regulatory protein A1I_03240 (256 aa).

A disordered region spans residues 1-21 (MAGHSKFKNIQHRKGAQDKKR).

Belongs to the TACO1 family.

It localises to the cytoplasm. This is Probable transcriptional regulatory protein A1I_03240 from Rickettsia bellii (strain OSU 85-389).